The chain runs to 79 residues: D-alanyl carrier protein (79 aa).

The 77-residue stretch at 1-77 (MSTKETVIDL…KIIQGIEELQ (77 aa)) folds into the Carrier domain. Residue S35 is modified to O-(pantetheine 4'-phosphoryl)serine.

This sequence belongs to the DltC family. 4'-phosphopantetheine is transferred from CoA to a specific serine of apo-DCP.

Its subcellular location is the cytoplasm. It functions in the pathway cell wall biogenesis; lipoteichoic acid biosynthesis. Its function is as follows. Carrier protein involved in the D-alanylation of lipoteichoic acid (LTA). The loading of thioester-linked D-alanine onto DltC is catalyzed by D-alanine--D-alanyl carrier protein ligase DltA. The DltC-carried D-alanyl group is further transferred to cell membrane phosphatidylglycerol (PG) by forming an ester bond, probably catalyzed by DltD. D-alanylation of LTA plays an important role in modulating the properties of the cell wall in Gram-positive bacteria, influencing the net charge of the cell wall. The sequence is that of D-alanyl carrier protein from Streptococcus equi subsp. equi (strain 4047).